Here is a 116-residue protein sequence, read N- to C-terminus: Nucleoid-associated protein P9215_00191 (116 aa).

Belongs to the YbaB/EbfC family. In terms of assembly, homodimer.

The protein resides in the cytoplasm. The protein localises to the nucleoid. Binds to DNA and alters its conformation. May be involved in regulation of gene expression, nucleoid organization and DNA protection. The protein is Nucleoid-associated protein P9215_00191 of Prochlorococcus marinus (strain MIT 9215).